We begin with the raw amino-acid sequence, 368 residues long: Galanin receptor type 3 (368 aa).

The Extracellular segment spans residues Met1–Val20. Asn6 is a glycosylation site (N-linked (GlcNAc...) asparagine). The helical transmembrane segment at Pro21–Val41 threads the bilayer. The Cytoplasmic portion of the chain corresponds to Leu42 to Thr57. The chain crosses the membrane as a helical span at residues Asp58–Phe78. Over Gln79 to Lys96 the chain is Extracellular. A disulfide bridge connects residues Cys95 and Cys172. Residues Ala97 to Val118 traverse the membrane as a helical segment. The Cytoplasmic portion of the chain corresponds to Asp119 to Asn138. A helical transmembrane segment spans residues Ala139–Ser159. At Tyr160–Leu184 the chain is on the extracellular side. The helical transmembrane segment at Asp185–Gly205 threads the bilayer. At Arg206 to Ala236 the chain is on the cytoplasmic side. The helical transmembrane segment at Met237–Cys257 threads the bilayer. At Phe258–Trp259 the chain is on the extracellular side. A helical transmembrane segment spans residues Tyr260–Ala280. Residues Tyr281–Glu368 are Cytoplasmic-facing. A lipid anchor (S-palmitoyl cysteine) is attached at Cys308. The tract at residues Arg317–Glu368 is disordered.

This sequence belongs to the G-protein coupled receptor 1 family.

It is found in the cell membrane. In terms of biological role, receptor for the hormone galanin. Receptor for the hormone spexin-1. This is Galanin receptor type 3 (GALR3) from Homo sapiens (Human).